Here is an 88-residue protein sequence, read N- to C-terminus: Putative cancer susceptibility gene HEPN1 protein (88 aa).

In terms of tissue distribution, expressed in liver. Expression is either down-regulated or lost in hepatocellular carcinomas (HCC).

The protein resides in the cytoplasm. The polypeptide is Putative cancer susceptibility gene HEPN1 protein (HEPN1) (Homo sapiens (Human)).